Here is a 297-residue protein sequence, read N- to C-terminus: Bifunctional protein FolD (297 aa).

NADP(+) is bound by residues 167–169, S192, and I233; that span reads GRS.

Belongs to the tetrahydrofolate dehydrogenase/cyclohydrolase family. Homodimer.

It catalyses the reaction (6R)-5,10-methylene-5,6,7,8-tetrahydrofolate + NADP(+) = (6R)-5,10-methenyltetrahydrofolate + NADPH. The catalysed reaction is (6R)-5,10-methenyltetrahydrofolate + H2O = (6R)-10-formyltetrahydrofolate + H(+). It participates in one-carbon metabolism; tetrahydrofolate interconversion. Functionally, catalyzes the oxidation of 5,10-methylenetetrahydrofolate to 5,10-methenyltetrahydrofolate and then the hydrolysis of 5,10-methenyltetrahydrofolate to 10-formyltetrahydrofolate. The sequence is that of Bifunctional protein FolD from Caulobacter vibrioides (strain ATCC 19089 / CIP 103742 / CB 15) (Caulobacter crescentus).